The primary structure comprises 335 residues: Glyceraldehyde-3-phosphate dehydrogenase (335 aa).

NAD(+) contacts are provided by residues 15–16 (RI) and D37. D-glyceraldehyde 3-phosphate contacts are provided by residues 155 to 157 (SCT), T186, R201, 214 to 215 (TG), and R237. Catalysis depends on C156, which acts as the Nucleophile. NAD(+) is bound by residues Q301 and N318.

It belongs to the glyceraldehyde-3-phosphate dehydrogenase family. As to quaternary structure, homotetramer.

It localises to the cytoplasm. The catalysed reaction is D-glyceraldehyde 3-phosphate + phosphate + NADP(+) = (2R)-3-phospho-glyceroyl phosphate + NADPH + H(+). It carries out the reaction D-glyceraldehyde 3-phosphate + phosphate + NAD(+) = (2R)-3-phospho-glyceroyl phosphate + NADH + H(+). It participates in carbohydrate degradation; glycolysis; pyruvate from D-glyceraldehyde 3-phosphate: step 1/5. In Haloarcula vallismortis (Halobacterium vallismortis), this protein is Glyceraldehyde-3-phosphate dehydrogenase (gap).